A 444-amino-acid polypeptide reads, in one-letter code: Homocysteine/cysteine synthase (444 aa).

Residue lysine 208 is modified to N6-(pyridoxal phosphate)lysine.

It belongs to the trans-sulfuration enzymes family. Homotetramer. Pyridoxal 5'-phosphate serves as cofactor.

It is found in the cytoplasm. The enzyme catalyses O-acetyl-L-homoserine + methanethiol = L-methionine + acetate + H(+). It carries out the reaction O-acetyl-L-homoserine + hydrogen sulfide = L-homocysteine + acetate. The catalysed reaction is O-acetyl-L-serine + hydrogen sulfide = L-cysteine + acetate. It functions in the pathway amino-acid biosynthesis; L-methionine biosynthesis via de novo pathway; L-homocysteine from O-acetyl-L-homoserine. Its pathway is amino-acid biosynthesis; L-cysteine biosynthesis; L-cysteine from L-serine: step 2/2. Functionally, catalyzes the conversion of O-acetyl-L-homoserine (OAH) into homocysteine in the methionine biosynthesis pathway. Also catalyzes the conversion of O-acetylserine (OAS) into cysteine, the last step in the cysteine biosynthesis pathway. The sequence is that of Homocysteine/cysteine synthase (MET17) from Kluyveromyces lactis (strain ATCC 8585 / CBS 2359 / DSM 70799 / NBRC 1267 / NRRL Y-1140 / WM37) (Yeast).